The chain runs to 278 residues: Urease accessory protein UreD (278 aa).

It belongs to the UreD family. UreD, UreF and UreG form a complex that acts as a GTP-hydrolysis-dependent molecular chaperone, activating the urease apoprotein by helping to assemble the nickel containing metallocenter of UreC. The UreE protein probably delivers the nickel.

It is found in the cytoplasm. Required for maturation of urease via the functional incorporation of the urease nickel metallocenter. The polypeptide is Urease accessory protein UreD (Blochmanniella pennsylvanica (strain BPEN)).